Reading from the N-terminus, the 176-residue chain is ATP synthase subunit b (176 aa).

The chain crosses the membrane as a helical span at residues 7 to 27 (IQIPDGSAIFVLLTFILLMFI). The interval 75-94 (SQSQATALMENARKSSEEQS) is disordered. The segment covering 85-94 (NARKSSEEQS) has biased composition (basic and acidic residues).

The protein belongs to the ATPase B chain family. F-type ATPases have 2 components, F(1) - the catalytic core - and F(0) - the membrane proton channel. F(1) has five subunits: alpha(3), beta(3), gamma(1), delta(1), epsilon(1). F(0) has three main subunits: a(1), b(2) and c(10-14). The alpha and beta chains form an alternating ring which encloses part of the gamma chain. F(1) is attached to F(0) by a central stalk formed by the gamma and epsilon chains, while a peripheral stalk is formed by the delta and b chains.

It localises to the cell membrane. F(1)F(0) ATP synthase produces ATP from ADP in the presence of a proton or sodium gradient. F-type ATPases consist of two structural domains, F(1) containing the extramembraneous catalytic core and F(0) containing the membrane proton channel, linked together by a central stalk and a peripheral stalk. During catalysis, ATP synthesis in the catalytic domain of F(1) is coupled via a rotary mechanism of the central stalk subunits to proton translocation. In terms of biological role, component of the F(0) channel, it forms part of the peripheral stalk, linking F(1) to F(0). The polypeptide is ATP synthase subunit b (Oenococcus oeni (strain ATCC BAA-331 / PSU-1)).